Reading from the N-terminus, the 367-residue chain is 2-oxoisovalerate dehydrogenase subunit alpha (367 aa).

Substrate contacts are provided by residues F66, Y95, 128–131 (MPEH), and S144. 94–96 (YYR) contacts thiamine diphosphate. Thiamine diphosphate is bound by residues 144–146 (SPI), 174–180 (GDGATSE), 204–208 (NFYAI), and H273. The Mg(2+) site is built by D175, N204, and Y206.

Belongs to the BCKDHA family. As to quaternary structure, heterotetramer of two alpha and two beta chains. Directly associated with ODBB in the E1 complex. Requires thiamine diphosphate as cofactor.

It carries out the reaction N(6)-[(R)-lipoyl]-L-lysyl-[protein] + 3-methyl-2-oxobutanoate + H(+) = N(6)-[(R)-S(8)-2-methylpropanoyldihydrolipoyl]-L-lysyl-[protein] + CO2. Its function is as follows. The branched-chain alpha-keto dehydrogenase complex catalyzes the overall conversion of alpha-keto acids to acyl-CoA and CO(2). It contains multiple copies of three enzymatic components: branched-chain alpha-keto acid decarboxylase (E1), lipoamide acyltransferase (E2) and lipoamide dehydrogenase (E3). In Thermus thermophilus (strain ATCC BAA-163 / DSM 7039 / HB27), this protein is 2-oxoisovalerate dehydrogenase subunit alpha.